The following is a 2147-amino-acid chain: Probable serine/threonine-protein kinase roco6 (2147 aa).

The Extracellular portion of the chain corresponds to Met-1–Arg-1055. LRR repeat units follow at residues Asp-69–Pro-89, Ser-101–Leu-122, Gln-124–Glu-145, Leu-148–Phe-169, Ile-171–Glu-192, Gly-193–Glu-214, Ser-215–Leu-236, Val-237–Arg-256, His-306–Thr-328, Glu-329–Tyr-350, and Arg-352–Ile-372. Residues Gln-390–Leu-750 enclose the Roc domain. The interval Gln-390–Leu-750 is small GTPase-like. Residue Gly-403–Thr-410 participates in GTP binding. Disordered stretches follow at residues Asn-491 to Asn-582 and Ser-602 to Gly-621. Low complexity-rich tracts occupy residues Ser-492 to Ser-512, Asn-519 to Ser-531, Asn-539 to Ser-568, and Ser-602 to Ser-617. GTP contacts are provided by residues Asp-634–Gln-638 and Thr-691–Asp-694. Residues Pro-758–Ser-892 enclose the COR domain. Low complexity-rich tracts occupy residues Gly-905–Thr-941 and Ser-960–Ser-977. Residues Gly-905–Gly-995 form a disordered region. Residues Val-1051 to Ser-1098 form a WD 1 repeat. A helical membrane pass occupies residues Trp-1056–Ile-1076. Residues Ser-1077–Ser-2147 are Cytoplasmic-facing. LRR repeat units follow at residues Ile-1237 to Pro-1263, Asp-1274 to Pro-1297, and Glu-1325 to Tyr-1348. A Protein kinase domain is found at Phe-1356–Ile-1627. Residues Ile-1362–Ile-1370 and Lys-1383 contribute to the ATP site. Asp-1481 acts as the Proton acceptor in catalysis. The tract at residues Ala-1653–Asn-1699 is disordered. The segment covering Gln-1662–Asn-1699 has biased composition (low complexity). WD repeat units lie at residues Gln-1735–Arg-1774 and Leu-1778–Gln-1820. Residues Ser-1821–Asn-1923 enclose the PH domain. The WD 4 repeat unit spans residues His-2031 to Lys-2068.

The protein belongs to the protein kinase superfamily. TKL Ser/Thr protein kinase family. ROCO subfamily.

The protein resides in the membrane. The catalysed reaction is L-seryl-[protein] + ATP = O-phospho-L-seryl-[protein] + ADP + H(+). It carries out the reaction L-threonyl-[protein] + ATP = O-phospho-L-threonyl-[protein] + ADP + H(+). In terms of biological role, may act as a serine/threonine-protein kinase and guanine-nucleotide releasing factor. This chain is Probable serine/threonine-protein kinase roco6 (roco6), found in Dictyostelium discoideum (Social amoeba).